The primary structure comprises 34 residues: Potassium channel toxin alpha-KTx 6.2 (34 aa).

Intrachain disulfides connect Cys-3–Cys-24, Cys-9–Cys-29, Cys-13–Cys-19, and Cys-31–Cys-34. Position 34 is a cysteine amide (Cys-34).

The protein belongs to the short scorpion toxin superfamily. Potassium channel inhibitor family. Alpha-KTx 06 subfamily. Expressed by the venom gland.

Its subcellular location is the secreted. In terms of biological role, blocks voltage-gated potassium channels Kv1.2/KCNA2 (IC(50)=0.12-0.8 nM), KCa3.1/KCNN4 (IC(50)=1-2.2 nM), Shaker B (IC(50)=2.39-80 nM), Kv1.1/KCNA1 (IC(50)=37-45 or no activity, depending on the study), Kv1.3/KCNA3 (IC(50)=150-180 or no activity, depending on the study). The polypeptide is Potassium channel toxin alpha-KTx 6.2 (Scorpio palmatus (Israeli golden scorpion)).